The chain runs to 300 residues: Ribosomal protein bS6--L-glutamate ligase (300 aa).

In terms of domain architecture, ATP-grasp spans 104–287 (MQLLARQGID…IAGKMIRWIE (184 aa)). ATP-binding positions include lysine 141, 178–179 (EY), aspartate 187, and 211–213 (RSN). Residues aspartate 248, glutamate 260, and asparagine 262 each contribute to the Mg(2+) site. Mn(2+)-binding residues include aspartate 248, glutamate 260, and asparagine 262.

This sequence belongs to the RimK family. Requires Mg(2+) as cofactor. The cofactor is Mn(2+).

An L-glutamate ligase that catalyzes the ATP-dependent post-translational addition of glutamate residues to the C-terminus of ribosomal protein bS6 (RpsF). Is also able to catalyze the synthesis of poly-alpha-glutamate in vitro, via ATP hydrolysis from unprotected glutamate as substrate. The number of glutamate residues added to either RpsF or to poly-alpha-glutamate changes with pH. This is Ribosomal protein bS6--L-glutamate ligase from Escherichia fergusonii (strain ATCC 35469 / DSM 13698 / CCUG 18766 / IAM 14443 / JCM 21226 / LMG 7866 / NBRC 102419 / NCTC 12128 / CDC 0568-73).